Here is an 841-residue protein sequence, read N- to C-terminus: Alpha-glucuronidase A (841 aa).

The N-terminal stretch at 1–20 (MRGSNLFQLTLALLLSLVAA) is a signal peptide. N-linked (GlcNAc...) asparagine glycosylation is found at asparagine 51, asparagine 76, asparagine 149, asparagine 222, asparagine 279, asparagine 310, asparagine 343, asparagine 450, asparagine 465, asparagine 527, asparagine 576, asparagine 682, asparagine 723, and asparagine 732.

This sequence belongs to the glycosyl hydrolase 67 family.

The protein resides in the secreted. It catalyses the reaction an alpha-D-glucuronoside + H2O = D-glucuronate + an alcohol. Alpha-glucuronidase involved in the hydrolysis of xylan, a major structural heterogeneous polysaccharide found in plant biomass representing the second most abundant polysaccharide in the biosphere, after cellulose. Releases 4-O-methylglucuronic acid from xylan. This Aspergillus tubingensis protein is Alpha-glucuronidase A (aguA).